The primary structure comprises 187 residues: Threonylcarbamoyl-AMP synthase (187 aa).

Positions 4–187 (ILTLDNAVAT…DARSGQILRD (184 aa)) constitute a YrdC-like domain.

Belongs to the SUA5 family. TsaC subfamily.

It is found in the cytoplasm. It carries out the reaction L-threonine + hydrogencarbonate + ATP = L-threonylcarbamoyladenylate + diphosphate + H2O. In terms of biological role, required for the formation of a threonylcarbamoyl group on adenosine at position 37 (t(6)A37) in tRNAs that read codons beginning with adenine. Catalyzes the conversion of L-threonine, HCO(3)(-)/CO(2) and ATP to give threonylcarbamoyl-AMP (TC-AMP) as the acyladenylate intermediate, with the release of diphosphate. The sequence is that of Threonylcarbamoyl-AMP synthase from Xanthomonas oryzae pv. oryzae (strain MAFF 311018).